We begin with the raw amino-acid sequence, 185 residues long: Methanol dehydrogenase activator (185 aa).

The protein belongs to the Nudix hydrolase family. In terms of assembly, homodimer. Mg(2+) is required as a cofactor.

Involved in the activation of the NAD-dependent methanol dehydrogenase (MDH). MDH activation by Act involves hydrolytic removal of the nicotinamide mononucleotide (NMN) moiety of the NAD cofactor, changing its ping-pong type of reaction mechanism into a ternary complex reaction mechanism. It requires the presence of magnesium ions and is also able to use ADP-ribose. The chain is Methanol dehydrogenase activator from Bacillus methanolicus.